We begin with the raw amino-acid sequence, 649 residues long: Acetyl-coenzyme A synthetase (649 aa).

Residues 191–194 (RAGR), Thr311, and Asn335 each bind CoA. ATP-binding positions include 387-389 (GEP), 411-416 (DTWWQT), Asp500, and Arg515. CoA is bound at residue Ser523. Residue Arg526 participates in ATP binding. Mg(2+)-binding residues include Val537, Phe539, and Ile542. Arg584 lines the CoA pocket. Position 609 is an N6-acetyllysine (Lys609).

Belongs to the ATP-dependent AMP-binding enzyme family. The cofactor is Mg(2+). Acetylated. Deacetylation by the SIR2-homolog deacetylase activates the enzyme.

It catalyses the reaction acetate + ATP + CoA = acetyl-CoA + AMP + diphosphate. Functionally, catalyzes the conversion of acetate into acetyl-CoA (AcCoA), an essential intermediate at the junction of anabolic and catabolic pathways. AcsA undergoes a two-step reaction. In the first half reaction, AcsA combines acetate with ATP to form acetyl-adenylate (AcAMP) intermediate. In the second half reaction, it can then transfer the acetyl group from AcAMP to the sulfhydryl group of CoA, forming the product AcCoA. This chain is Acetyl-coenzyme A synthetase, found in Photobacterium profundum (strain SS9).